We begin with the raw amino-acid sequence, 99 residues long: NADH-quinone oxidoreductase subunit K (99 aa).

3 consecutive transmembrane segments (helical) span residues 3-23, 28-48, and 59-79; these read PDNY…GVLL, IVVF…FVAF, and VVAF…LAII.

The protein belongs to the complex I subunit 4L family. As to quaternary structure, NDH-1 is composed of 14 different subunits. Subunits NuoA, H, J, K, L, M, N constitute the membrane sector of the complex.

It localises to the cell membrane. It catalyses the reaction a quinone + NADH + 5 H(+)(in) = a quinol + NAD(+) + 4 H(+)(out). In terms of biological role, NDH-1 shuttles electrons from NADH, via FMN and iron-sulfur (Fe-S) centers, to quinones in the respiratory chain. The immediate electron acceptor for the enzyme in this species is believed to be a menaquinone. Couples the redox reaction to proton translocation (for every two electrons transferred, four hydrogen ions are translocated across the cytoplasmic membrane), and thus conserves the redox energy in a proton gradient. The chain is NADH-quinone oxidoreductase subunit K from Mycobacterium sp. (strain KMS).